Here is a 339-residue protein sequence, read N- to C-terminus: Serpentine receptor class alpha-20 (339 aa).

6 helical membrane passes run 30-50 (VSFV…VLAI), 113-132 (LYFY…SLTF), 151-171 (VSIS…YFGL), 199-219 (FRTT…YLNV), 249-269 (CILI…VNYI), and 284-304 (IAPF…VIYF).

It belongs to the nematode receptor-like protein sra family.

The protein localises to the membrane. The polypeptide is Serpentine receptor class alpha-20 (sra-20) (Caenorhabditis elegans).